The chain runs to 906 residues: Catenin alpha-1 (906 aa).

Position 2 is an N-acetylthreonine (Thr-2). The interval 2–228 is involved in homodimerization; that stretch reads TAVHAGNINF…PILYTASQAC (227 aa). A Glycyl lysine isopeptide (Lys-Gly) (interchain with G-Cter in SUMO2) cross-link involves residue Lys-57. An interaction with JUP and CTNNB1 region spans residues 97 to 148; the sequence is VRKQGDLMKSAAGEFADDPCSSVKRGNMVRAARALLSAVTRLLILADMADVY. Phosphoserine is present on residues Ser-264, Ser-295, and Ser-297. The tract at residues 325–394 is interaction with alpha-actinin; that stretch reads TRDDRRERIV…AVMDHVSDSF (70 aa). Phosphothreonine is present on Thr-634. Ser-641 bears the Phosphoserine mark. Residue Thr-645 is modified to Phosphothreonine. Phosphoserine is present on residues Ser-652 and Ser-655. Thr-658 bears the Phosphothreonine mark. Lys-797 is covalently cross-linked (Glycyl lysine isopeptide (Lys-Gly) (interchain with G-Cter in SUMO2)). Phosphoserine is present on Ser-851. Over residues 864–880 the composition is skewed to basic and acidic residues; sequence PEKKPLVKREKQDETQT. The segment at 864-894 is disordered; the sequence is PEKKPLVKREKQDETQTKIKRASQKKHVNPV. Over residues 881-891 the composition is skewed to basic residues; it reads KIKRASQKKHV.

Belongs to the vinculin/alpha-catenin family. In terms of assembly, monomer and homodimer; the monomer preferentially binds to CTNNB1 and the homodimer to actin. Component of an cadherin:catenin adhesion complex composed of at least of CDH26, beta-catenin/CTNNB1, alpha-catenin/CTNNA1 and p120 catenin/CTNND1. Possible component of an E-cadherin/ catenin adhesion complex together with E-cadherin/CDH1 and beta-catenin/CTNNB1 or gamma-catenin/JUP; the complex is located to adherens junctions. The stable association of CTNNA1 is controversial as CTNNA1 was shown not to bind to F-actin when assembled in the complex. Alternatively, the CTNNA1-containing complex may be linked to F-actin by other proteins such as LIMA1. Binds AFDN and F-actin. Interacts with LIMA1. Interacts with ARHGAP21. Interacts with AJUBA. Interacts with vinculin/VCL. Interacts with TJP2/ZO2 (via N-terminus). Interacts with TJP1/ZO1 (via N-terminus). Sumoylated. In terms of processing, phosphorylation seems to contribute to the strength of cell-cell adhesion rather than to the basic capacity for cell-cell adhesion. As to expression, expressed in cerebellum, heart, liver, small intestine, kidney and placenta (at protein level).

Its subcellular location is the cytoplasm. The protein localises to the cytoskeleton. The protein resides in the cell junction. It is found in the adherens junction. It localises to the cell membrane. Its subcellular location is the nucleus. Functionally, associates with the cytoplasmic domain of a variety of cadherins. The association of catenins to cadherins produces a complex which is linked to the actin filament network, and which seems to be of primary importance for cadherins cell-adhesion properties. Can associate with both E- and N-cadherins. Originally believed to be a stable component of E-cadherin/catenin adhesion complexes and to mediate the linkage of cadherins to the actin cytoskeleton at adherens junctions. In contrast, cortical actin was found to be much more dynamic than E-cadherin/catenin complexes and CTNNA1 was shown not to bind to F-actin when assembled in the complex suggesting a different linkage between actin and adherens junctions components. The homodimeric form may regulate actin filament assembly and inhibit actin branching by competing with the Arp2/3 complex for binding to actin filaments. Involved in the regulation of WWTR1/TAZ, YAP1 and TGFB1-dependent SMAD2 and SMAD3 nuclear accumulation. May play a crucial role in cell differentiation. The sequence is that of Catenin alpha-1 from Mus musculus (Mouse).